The primary structure comprises 104 residues: UPF0145 protein VIBHAR_02090 (104 aa).

The protein belongs to the UPF0145 family.

This is UPF0145 protein VIBHAR_02090 from Vibrio campbellii (strain ATCC BAA-1116).